A 189-amino-acid chain; its full sequence is ATP synthase subunit b (189 aa).

The chain crosses the membrane as a helical span at residues 25-45; sequence LPVWPEVVIGLICFGIVFFVF.

Belongs to the ATPase B chain family. F-type ATPases have 2 components, F(1) - the catalytic core - and F(0) - the membrane proton channel. F(1) has five subunits: alpha(3), beta(3), gamma(1), delta(1), epsilon(1). F(0) has three main subunits: a(1), b(2) and c(10-14). The alpha and beta chains form an alternating ring which encloses part of the gamma chain. F(1) is attached to F(0) by a central stalk formed by the gamma and epsilon chains, while a peripheral stalk is formed by the delta and b chains.

It is found in the cell membrane. F(1)F(0) ATP synthase produces ATP from ADP in the presence of a proton or sodium gradient. F-type ATPases consist of two structural domains, F(1) containing the extramembraneous catalytic core and F(0) containing the membrane proton channel, linked together by a central stalk and a peripheral stalk. During catalysis, ATP synthesis in the catalytic domain of F(1) is coupled via a rotary mechanism of the central stalk subunits to proton translocation. Functionally, component of the F(0) channel, it forms part of the peripheral stalk, linking F(1) to F(0). This Streptomyces griseus subsp. griseus (strain JCM 4626 / CBS 651.72 / NBRC 13350 / KCC S-0626 / ISP 5235) protein is ATP synthase subunit b.